A 367-amino-acid chain; its full sequence is sn-glycerol-3-phosphate import ATP-binding protein UgpC (367 aa).

Residues 4–235 (LSLRNVQKTY…PASTFVAGFI (232 aa)) enclose the ABC transporter domain. 37–44 (GPSGCGKS) contacts ATP.

Belongs to the ABC transporter superfamily. sn-glycerol-3-phosphate importer (TC 3.A.1.1.3) family. In terms of assembly, the complex is composed of two ATP-binding proteins (UgpC), two transmembrane proteins (UgpA and UgpE) and a solute-binding protein (UgpB).

Its subcellular location is the cell inner membrane. The catalysed reaction is sn-glycerol 3-phosphate(out) + ATP + H2O = sn-glycerol 3-phosphate(in) + ADP + phosphate + H(+). Its function is as follows. Part of the ABC transporter complex UgpBAEC involved in sn-glycerol-3-phosphate (G3P) import. Responsible for energy coupling to the transport system. This Cupriavidus metallidurans (strain ATCC 43123 / DSM 2839 / NBRC 102507 / CH34) (Ralstonia metallidurans) protein is sn-glycerol-3-phosphate import ATP-binding protein UgpC.